Reading from the N-terminus, the 66-residue chain is Beta-toxin Chui3 (66 aa).

The 66-residue stretch at 1 to 66 folds into the LCN-type CS-alpha/beta domain; it reads KEGYLVELGT…VWPLKNKTCR (66 aa). Cystine bridges form between cysteine 12/cysteine 65, cysteine 16/cysteine 41, cysteine 25/cysteine 46, and cysteine 29/cysteine 48.

The protein belongs to the long (4 C-C) scorpion toxin superfamily. Sodium channel inhibitor family. Beta subfamily. As to expression, expressed by the venom gland.

Its subcellular location is the secreted. In terms of biological role, beta toxins bind voltage-independently at site-4 of sodium channels (Nav) and shift the voltage of activation toward more negative potentials thereby affecting sodium channel activation and promoting spontaneous and repetitive firing. Acts on human sodium channel Nav1.6/SCN8A. This Centruroides huichol (Scorpion) protein is Beta-toxin Chui3.